A 505-amino-acid chain; its full sequence is ADP-ribosylarginine hydrolase CG2909 (505 aa).

Arg-198, Gly-336, Gly-338, Gly-340, Val-341, Trp-342, Trp-377, Asp-432, Asn-439, Glu-440, Gly-450, and Asp-451 together coordinate ADP-D-ribose.

It carries out the reaction N(omega)-(ADP-D-ribosyl)-L-arginyl-[protein] + H2O = ADP-D-ribose + L-arginyl-[protein]. The catalysed reaction is N(omega)-(ADP-D-ribosyl)-L-arginine + H2O = ADP-D-ribose + L-arginine. Functionally, protein ADP-ribosyl hydrolase that specifically removes mono-ADP-ribosyl modifications from protein arginine residues. This chain is ADP-ribosylarginine hydrolase CG2909, found in Drosophila melanogaster (Fruit fly).